A 366-amino-acid chain; its full sequence is Isopropyl malate dehydrogenase htyC (366 aa).

Valine 71–glycine 73 provides a ligand contact to NADP(+). The substrate site is built by arginine 91 and arginine 130. Aspartate 221, aspartate 246, and aspartate 250 together coordinate Mg(2+). Glycine 277 to isoleucine 282 contributes to the NADP(+) binding site.

This sequence belongs to the isocitrate and isopropylmalate dehydrogenases family. Homodimer. The cofactor is Mg(2+). It depends on Mn(2+) as a cofactor.

The enzyme catalyses (2R,3S)-3-isopropylmalate + NAD(+) = 4-methyl-2-oxopentanoate + CO2 + NADH. It participates in antifungal biosynthesis. Functionally, isopropyl malate dehydrogenase; part of the gene cluster that mediates the de novo generation of L-homotyrosine from acetyl-CoA and 4-hydroxyphenyl-pyruvate. L-homotyrosine is a building block of echinocandin B, a fungal lipidated cyclic hexapeptide that acts as an antifungal agent. L-homotyrosine 4-hydroxyphenyl-pyruvate first undergoes an aldol-type condensation by htyA with the C-2 of acetyl-CoA followed by the release of CoA to form 2-(4-hydroxybenzyl)-malate. This is followed by isomerization of 2-(4-hydroxy-benzyl)-malate to 3-(4-hydroxybenzyl)-malate by htyD. Thereafter, 3-(4-hydroxybenzyl)-malate undergoes decarboxylation and oxidation to form 2-oxo-4-(4-hydroxybenzyl)butanoic acid, coupled to reduction of NAD(+) to NADH by htyC. The product then undergoes transamination catalyzed by htyB to form L-homotyrosine. This Aspergillus rugulosus (Emericella rugulosa) protein is Isopropyl malate dehydrogenase htyC.